The primary structure comprises 350 residues: ATPase GET3 (350 aa).

Residue 26–33 (KGGVGKTT) coordinates ATP. Residue Asp57 is part of the active site. ATP-binding residues include Glu243 and Asn270. Zn(2+) is bound by residues Cys282 and Cys285.

This sequence belongs to the arsA ATPase family. As to quaternary structure, homodimer. Component of the Golgi to ER traffic (GET) complex, which is composed of GET1, GET2 and GET3. Within the complex, GET1 and GET2 form a heterotetramer which is stabilized by phosphatidylinositol binding and which binds to the GET3 homodimer. Interacts with the chloride channel protein GEF1.

Its subcellular location is the cytoplasm. It localises to the endoplasmic reticulum. The protein resides in the golgi apparatus. Functionally, ATPase required for the post-translational delivery of tail-anchored (TA) proteins to the endoplasmic reticulum. Recognizes and selectively binds the transmembrane domain of TA proteins in the cytosol. This complex then targets to the endoplasmic reticulum by membrane-bound receptors GET1 and GET2, where the tail-anchored protein is released for insertion. This process is regulated by ATP binding and hydrolysis. ATP binding drives the homodimer towards the closed dimer state, facilitating recognition of newly synthesized TA membrane proteins. ATP hydrolysis is required for insertion. Subsequently, the homodimer reverts towards the open dimer state, lowering its affinity for the GET1-GET2 receptor, and returning it to the cytosol to initiate a new round of targeting. Cooperates with the HDEL receptor ERD2 to mediate the ATP-dependent retrieval of resident ER proteins that contain a C-terminal H-D-E-L retention signal from the Golgi to the ER. Involved in low-level resistance to the oxyanions arsenite and arsenate, and in heat tolerance. The sequence is that of ATPase GET3 from Candida albicans (strain SC5314 / ATCC MYA-2876) (Yeast).